A 244-amino-acid polypeptide reads, in one-letter code: Triosephosphate isomerase (244 aa).

Residue 9–11 (NWK) participates in substrate binding. The Electrophile role is filled by His93. Glu161 serves as the catalytic Proton acceptor. Substrate contacts are provided by residues Gly167, Ser206, and 227–228 (GG).

Belongs to the triosephosphate isomerase family. As to quaternary structure, homodimer.

The protein localises to the cytoplasm. It catalyses the reaction D-glyceraldehyde 3-phosphate = dihydroxyacetone phosphate. The protein operates within carbohydrate biosynthesis; gluconeogenesis. It participates in carbohydrate degradation; glycolysis; D-glyceraldehyde 3-phosphate from glycerone phosphate: step 1/1. Its function is as follows. Involved in the gluconeogenesis. Catalyzes stereospecifically the conversion of dihydroxyacetone phosphate (DHAP) to D-glyceraldehyde-3-phosphate (G3P). The sequence is that of Triosephosphate isomerase from Deinococcus geothermalis (strain DSM 11300 / CIP 105573 / AG-3a).